The sequence spans 109 residues: Large ribosomal subunit protein P1 (109 aa).

Positions 71 to 109 (APAAASSAPAKKEEPKKEEPKKEEPKEEETDMDMGDLFG) are disordered. A compositionally biased stretch (basic and acidic residues) spans 80–95 (AKKEEPKKEEPKKEEP). Tandem repeats lie at residues 81 to 85 (KKEEP), 86 to 90 (KKEEP), and 91 to 95 (KKEEP). The tract at residues 81 to 95 (KKEEPKKEEPKKEEP) is 3 X 5 AA tandem repeats of K-K-E-E-P. Residues 96–109 (KEEETDMDMGDLFG) show a composition bias toward acidic residues.

The protein belongs to the eukaryotic ribosomal protein P1/P2 family. Not phosphorylated.

In Tetrahymena thermophila, this protein is Large ribosomal subunit protein P1 (RPLP1).